A 201-amino-acid chain; its full sequence is Holliday junction resolvase RecU (201 aa).

Mg(2+) is bound by residues Thr85, Asp87, Glu100, and Gln119.

The protein belongs to the RecU family. Mg(2+) is required as a cofactor.

It localises to the cytoplasm. It carries out the reaction Endonucleolytic cleavage at a junction such as a reciprocal single-stranded crossover between two homologous DNA duplexes (Holliday junction).. In terms of biological role, endonuclease that resolves Holliday junction intermediates in genetic recombination. Cleaves mobile four-strand junctions by introducing symmetrical nicks in paired strands. Promotes annealing of linear ssDNA with homologous dsDNA. Required for DNA repair, homologous recombination and chromosome segregation. This is Holliday junction resolvase RecU from Geobacillus sp. (strain WCH70).